A 380-amino-acid polypeptide reads, in one-letter code: DNA replication and repair protein RecF (380 aa).

30–37 (GENAQGKT) is an ATP binding site.

Belongs to the RecF family.

It is found in the cytoplasm. The RecF protein is involved in DNA metabolism; it is required for DNA replication and normal SOS inducibility. RecF binds preferentially to single-stranded, linear DNA. It also seems to bind ATP. The chain is DNA replication and repair protein RecF from Synechococcus sp. (strain JA-3-3Ab) (Cyanobacteria bacterium Yellowstone A-Prime).